Consider the following 339-residue polypeptide: Large ribosomal subunit protein uL29 (339 aa).

Residues 1 to 96 (MNDLTKKSVE…FAKQRKAKIE (96 aa)) are large ribosomal subunit protein uL29. The tract at residues 97-339 (QMMAEQQAAE…KTTKKGTGKK (243 aa)) is unknown. Disordered stretches follow at residues 129 to 254 (VVST…VPTK) and 311 to 339 (KENR…TGKK). Low complexity predominate over residues 145-156 (APVAAKKPAAAK). Positions 157-170 (DFPKQKDVVEEKTA) are enriched in basic and acidic residues. Positions 171–182 (TGKPAAPSAKKA) are enriched in low complexity. Residues 185–210 (AKKDVAQETKTDKDAALKALIKEKAA) show a composition bias toward basic and acidic residues. The segment covering 217 to 238 (KSKTSTPSGKTTVTVKSVTSAK) has biased composition (low complexity). The segment covering 239–248 (ADIEVPKETS) has biased composition (basic and acidic residues).

The protein belongs to the universal ribosomal protein uL29 family. Forms homomultimers. Part of the ribosome; radioactive IRS binds to purified ribosomes.

In terms of biological role, specifically binds a DNA inverted repeat sequence (IRS) found downstream of rpsB in one of the ribosomal subunit operons (for genes rpsB, tsf, and unknown gene x). Might be involved in regulation of transcription of the rpsB operon; the IRS may be a control element to attenuate transcription. This is Large ribosomal subunit protein uL29 from Spiroplasma citri.